A 166-amino-acid chain; its full sequence is Interferon gamma (166 aa).

The signal sequence occupies residues 1 to 23; sequence MNYTTICLAFQLCVIFCSSGYYC. Q24 carries the post-translational modification Pyrrolidone carboxylic acid. 3 N-linked (GlcNAc...) asparagine glycosylation sites follow: N39, N106, and N107.

Belongs to the type II (or gamma) interferon family. As to quaternary structure, homodimer. Interacts with IFNGR1 (via extracellular domain); this interaction promotes IFNGR1 dimerization.

It is found in the secreted. Functionally, type II interferon produced by immune cells such as T-cells and NK cells that plays crucial roles in antimicrobial, antiviral, and antitumor responses by activating effector immune cells and enhancing antigen presentation. Primarily signals through the JAK-STAT pathway after interaction with its receptor IFNGR1 to affect gene regulation. Upon IFNG binding, IFNGR1 intracellular domain opens out to allow association of downstream signaling components JAK2, JAK1 and STAT1, leading to STAT1 activation, nuclear translocation and transcription of IFNG-regulated genes. Many of the induced genes are transcription factors such as IRF1 that are able to further drive regulation of a next wave of transcription. Plays a role in class I antigen presentation pathway by inducing a replacement of catalytic proteasome subunits with immunoproteasome subunits. In turn, increases the quantity, quality, and repertoire of peptides for class I MHC loading. Increases the efficiency of peptide generation also by inducing the expression of activator PA28 that associates with the proteasome and alters its proteolytic cleavage preference. Up-regulates as well MHC II complexes on the cell surface by promoting expression of several key molecules such as cathepsins B/CTSB, H/CTSH, and L/CTSL. Participates in the regulation of hematopoietic stem cells during development and under homeostatic conditions by affecting their development, quiescence, and differentiation. The chain is Interferon gamma (IFNG) from Mustela putorius furo (European domestic ferret).